A 106-amino-acid chain; its full sequence is Translation initiation factor 1A 2 (106 aa).

Residues 1-24 are disordered; the sequence is MRKRREGTANNSPTPEVTRVRTPR. An S1-like domain is found at 18–92; it reads TRVRTPRKEN…SKADVIWKYT (75 aa).

It belongs to the eIF-1A family.

Seems to be required for maximal rate of protein biosynthesis. Enhances ribosome dissociation into subunits and stabilizes the binding of the initiator Met-tRNA(I) to 40 S ribosomal subunits. The polypeptide is Translation initiation factor 1A 2 (eIF1A2) (Methanosarcina mazei (strain ATCC BAA-159 / DSM 3647 / Goe1 / Go1 / JCM 11833 / OCM 88) (Methanosarcina frisia)).